We begin with the raw amino-acid sequence, 362 residues long: MGFKCGIIGLPNVGKSTLFNLLTKGNSAVANFPFCTIKPNIGIVPVIDERINNLNQIVSPQKTVNAFIEFIDIAGLVKGASQGEGLGNQFLGNIRDVHAIAHVVRCFKDDNITHIYNQVQPIKDIDIINSELILSDFDLCEKTILKLQKKTLLKNKETQEKINTLKKCLNHLKQFFMLKTLNLNKTEKQLISYLRFLTLKPTMYIANINEEKESYYFLDKLNEIAKKEGSIVIPIHANLELDLVKMSDEEKKSFMKLFNIKTLGLNSIISSGYHLLNLITFFTVGDKEIRAWAIPNGSTSIEAAHKIHSDFSKGFIRAQIIKYVDFITYKSEAKIKEMGKFRTEGKQYYIQDGDIIHFLFNV.

Positions 3–255 constitute an OBG-type G domain; sequence FKCGIIGLPN…MSDEEKKSFM (253 aa). Position 12–17 (12–17) interacts with ATP; sequence NVGKST. Mg(2+) is bound by residues serine 16 and threonine 36. The region spanning 277-360 is the TGS domain; that stretch reads NLITFFTVGD…QDGDIIHFLF (84 aa).

It belongs to the TRAFAC class OBG-HflX-like GTPase superfamily. OBG GTPase family. YchF/OLA1 subfamily. The cofactor is Mg(2+).

ATPase that binds to both the 70S ribosome and the 50S ribosomal subunit in a nucleotide-independent manner. The chain is Ribosome-binding ATPase YchF from Buchnera aphidicola subsp. Acyrthosiphon pisum (strain APS) (Acyrthosiphon pisum symbiotic bacterium).